We begin with the raw amino-acid sequence, 529 residues long: Bifunctional purine biosynthesis protein PurH (529 aa).

Positions 1 to 148 (MQQRRPVRRA…KNHKDVAIVV (148 aa)) constitute an MGS-like domain.

Belongs to the PurH family.

It carries out the reaction (6R)-10-formyltetrahydrofolate + 5-amino-1-(5-phospho-beta-D-ribosyl)imidazole-4-carboxamide = 5-formamido-1-(5-phospho-D-ribosyl)imidazole-4-carboxamide + (6S)-5,6,7,8-tetrahydrofolate. It catalyses the reaction IMP + H2O = 5-formamido-1-(5-phospho-D-ribosyl)imidazole-4-carboxamide. It participates in purine metabolism; IMP biosynthesis via de novo pathway; 5-formamido-1-(5-phospho-D-ribosyl)imidazole-4-carboxamide from 5-amino-1-(5-phospho-D-ribosyl)imidazole-4-carboxamide (10-formyl THF route): step 1/1. It functions in the pathway purine metabolism; IMP biosynthesis via de novo pathway; IMP from 5-formamido-1-(5-phospho-D-ribosyl)imidazole-4-carboxamide: step 1/1. The chain is Bifunctional purine biosynthesis protein PurH from Salmonella heidelberg (strain SL476).